The primary structure comprises 299 residues: tRNA dimethylallyltransferase (299 aa).

Gly-8–Thr-15 is a binding site for ATP. Thr-10–Thr-15 is a binding site for substrate. Residues Asp-33–Gln-36 form an interaction with substrate tRNA region.

The protein belongs to the IPP transferase family. As to quaternary structure, monomer. The cofactor is Mg(2+).

It catalyses the reaction adenosine(37) in tRNA + dimethylallyl diphosphate = N(6)-dimethylallyladenosine(37) in tRNA + diphosphate. Its function is as follows. Catalyzes the transfer of a dimethylallyl group onto the adenine at position 37 in tRNAs that read codons beginning with uridine, leading to the formation of N6-(dimethylallyl)adenosine (i(6)A). The chain is tRNA dimethylallyltransferase from Anaeromyxobacter dehalogenans (strain 2CP-C).